Here is a 127-residue protein sequence, read N- to C-terminus: Large ribosomal subunit protein bL17 (127 aa).

It belongs to the bacterial ribosomal protein bL17 family. Part of the 50S ribosomal subunit. Contacts protein L32.

The protein is Large ribosomal subunit protein bL17 of Legionella pneumophila (strain Corby).